Reading from the N-terminus, the 308-residue chain is Homoserine O-acetyltransferase (308 aa).

The Acyl-thioester intermediate role is filled by C142. The substrate site is built by K163 and S192. The active-site Proton acceptor is H235. Residue E237 is part of the active site. Residue R249 participates in substrate binding.

Belongs to the MetA family.

The protein localises to the cytoplasm. The enzyme catalyses L-homoserine + acetyl-CoA = O-acetyl-L-homoserine + CoA. Its pathway is amino-acid biosynthesis; L-methionine biosynthesis via de novo pathway; O-acetyl-L-homoserine from L-homoserine: step 1/1. Its function is as follows. Transfers an acetyl group from acetyl-CoA to L-homoserine, forming acetyl-L-homoserine. The sequence is that of Homoserine O-acetyltransferase from Rhizobium rhizogenes (strain K84 / ATCC BAA-868) (Agrobacterium radiobacter).